A 611-amino-acid chain; its full sequence is RAC serine/threonine-protein kinase (611 aa).

A compositionally biased stretch (low complexity) spans 14–25; it reads VVASAPAPGSAS. Disordered stretches follow at residues 14–33 and 45–88; these read VVAS…SPTT and QSTH…NTTF. A Phosphoserine modification is found at Ser30. The 106-residue stretch at 106 to 211 folds into the PH domain; the sequence is QVVKEGWLMK…WTEAIRNVSS (106 aa). The Protein kinase domain maps to 266-523; it reads FEFLKVLGKG…VKEIQAHPFF (258 aa). Residues 272-280 and Lys295 each bind ATP; that span reads LGKGTFGKV. Catalysis depends on Asp389, which acts as the Proton acceptor. One can recognise an AGC-kinase C-terminal domain in the interval 524-597; that stretch reads ASINWTDLVL…QGDMASTLGT (74 aa). Ser586 carries the post-translational modification Phosphoserine.

This sequence belongs to the protein kinase superfamily. AGC Ser/Thr protein kinase family. RAC subfamily. Interacts with trbl. In terms of processing, phosphorylated and activated by Pk61C/PDK1. Phosphorylated on Ser-586 by the TORC2 complex. As to expression, ubiquitously expressed. Present in ovary, where it is concentrated at the basal side of follicle cells.

It is found in the cytoplasm. The protein resides in the cytosol. It localises to the cell membrane. It carries out the reaction L-seryl-[protein] + ATP = O-phospho-L-seryl-[protein] + ADP + H(+). It catalyses the reaction L-threonyl-[protein] + ATP = O-phospho-L-threonyl-[protein] + ADP + H(+). Its function is as follows. Serine/threonine kinase involved in various developmental processes. During early embryogenesis, acts as a survival protein. During mid-embryogenesis, phosphorylates and activates trh, a transcription factor required for tracheal cell fate determination. Also regulates tracheal cell migration. Later in development, acts downstream of PI3K and Pk61C/PDK1 in the insulin receptor transduction pathway which regulates cell growth and organ size, by phosphorylating and antagonizing FOXO transcription factor. Controls follicle cell size during oogenesis. May also stimulate cell growth by phosphorylating Gig/Tsc2 and inactivating the Tsc complex. Dephosphorylation of 'Ser-586' by Phlpp triggers apoptosis and suppression of tumor growth. This Drosophila melanogaster (Fruit fly) protein is RAC serine/threonine-protein kinase.